The sequence spans 720 residues: MSASDLTSVQATAPQGRRQILVTSALPYANGQIHIGHLVEYIQTDIWVRTLRMHGHEVYYIGADDTHGTPVMLRAEKEGLTPKQLIDRVWTEHKRDFDSFGVSFDNFYSTDSDENRVLSESIYLALKENGLIAERAIEQAYDPVKEMFLPDRFIKGECPKCHAKDQYGDNCEVCGSTYLPTELLNPYSVVSGATPVRKTSTHYFFRLSDPRCESFLREWVSGLAQPEATNKMREWLGDAGEAKLADWDISRDAPYFGFEIPGAPGKYFYVWLDAPVGYYASFKNLCDREGIDFDAWIRAGSTAEQYHFIGKDILYFHTLFWPAMLEFSGHRTPTNVFAHGFLTVDGAKMSKSRGTFITAQSYIDTGLNPEWLRYYFAAKLNATMEDIDLNLDDFQARVNSDLVGKYVNIASRAAGFLIKRFDGRVQDSAMNHPLVAKLRDAIASIAAHYEGREYSRALRHTMELADEVNAYVDGAKPWELAKDPANAVALHETCSVSLEAFRLLSLALKPVMPRVAEAVEAFFGVAPLAWADAAKPLSSAQPIKAYQHLMTRVDPKQIDALLAANRDSLQADAAGAAAAGATAANAAKDAKNAKANAKAVAANGADDAPISIDDFAKVDLRIAKIVACQAVEGSDKLLQLTLDIGEEKTRNVFSGIKSAYQPEQLVGKLTVMVANLAPRKMKFGLSEGMVLAASAADEKAEPGLYILEPHSGAKPGMRVK.

Residues 27–37 (PYANGQIHIGH) carry the 'HIGH' region motif. Zn(2+) contacts are provided by C158, C161, C171, and C174. The 'KMSKS' region motif lies at 348–352 (KMSKS). K351 contributes to the ATP binding site. The tRNA-binding domain occupies 614-720 (DFAKVDLRIA…SGAKPGMRVK (107 aa)).

The protein belongs to the class-I aminoacyl-tRNA synthetase family. MetG type 1 subfamily. Homodimer. The cofactor is Zn(2+).

The protein resides in the cytoplasm. It carries out the reaction tRNA(Met) + L-methionine + ATP = L-methionyl-tRNA(Met) + AMP + diphosphate. Functionally, is required not only for elongation of protein synthesis but also for the initiation of all mRNA translation through initiator tRNA(fMet) aminoacylation. This chain is Methionine--tRNA ligase, found in Burkholderia ambifaria (strain ATCC BAA-244 / DSM 16087 / CCUG 44356 / LMG 19182 / AMMD) (Burkholderia cepacia (strain AMMD)).